Consider the following 47-residue polypeptide: Conotoxin Bu10 (47 aa).

Positions 1–22 are excised as a propeptide; that stretch reads DSRGTQLHRALRKATILSVSAR. 3 disulfide bridges follow: cysteine 23-cysteine 37, cysteine 30-cysteine 41, and cysteine 36-cysteine 46. Cysteine 46 is subject to Cysteine amide.

It belongs to the conotoxin O1 superfamily. In terms of tissue distribution, expressed by the venom duct.

The protein localises to the secreted. This chain is Conotoxin Bu10, found in Conus bullatus (Bubble cone).